The sequence spans 233 residues: Chromosome partition protein MukE (233 aa).

A disordered region spans residues 207-233 (SLSLHDESDDADVTMGNAADSVEDEQE).

Belongs to the MukE family. Interacts, and probably forms a ternary complex, with MukF and MukB. The complex formation is stimulated by calcium or magnesium.

The protein localises to the cytoplasm. Its subcellular location is the nucleoid. Involved in chromosome condensation, segregation and cell cycle progression. May participate in facilitating chromosome segregation by condensation DNA from both sides of a centrally located replisome during cell division. Probably acts via its interaction with MukB and MukF. In Yersinia pestis, this protein is Chromosome partition protein MukE.